A 466-amino-acid chain; its full sequence is Asparagine--tRNA ligase (466 aa).

It belongs to the class-II aminoacyl-tRNA synthetase family. In terms of assembly, homodimer.

The protein localises to the cytoplasm. The enzyme catalyses tRNA(Asn) + L-asparagine + ATP = L-asparaginyl-tRNA(Asn) + AMP + diphosphate + H(+). In Shewanella baltica (strain OS195), this protein is Asparagine--tRNA ligase.